The following is a 155-amino-acid chain: Transcriptional repressor NrdR (155 aa).

Polar residues predominate over residues 1–11; it reads MECPNCHQNAS. A disordered region spans residues 1-22; sequence MECPNCHQNASRVIDSRPSDEN. Residues 3–34 fold into a zinc finger; that stretch reads CPNCHQNASRVIDSRPSDENRAIRRRRECENC. In terms of domain architecture, ATP-cone spans 49–139; it reads LLVIKNDGTR…IYREFKDMSS (91 aa).

The protein belongs to the NrdR family. It depends on Zn(2+) as a cofactor.

In terms of biological role, negatively regulates transcription of bacterial ribonucleotide reductase nrd genes and operons by binding to NrdR-boxes. In Lactobacillus helveticus (strain DPC 4571), this protein is Transcriptional repressor NrdR.